Reading from the N-terminus, the 1199-residue chain is Chromatin structure-remodeling complex subunit snf21 (1199 aa).

One can recognise an HSA domain in the interval 256–328 (QRSDRERRLK…AKQRLQALKE (73 aa)). The 166-residue stretch at 429 to 594 (ISLYNNHLNG…WALLNFVLPR (166 aa)) folds into the Helicase ATP-binding domain. An ATP-binding site is contributed by 442 to 449 (DEMGLGKT). The DEGH box signature appears at 544 to 547 (DEGH). The Helicase C-terminal domain maps to 740–903 (LLDRILPKLF…STPEEREAFL (164 aa)). The disordered stretch occupies residues 1017 to 1059 (MESEARPTRGRPKRNIASVDETPALTLNGKPKKKRGPAPDTLT). The region spanning 1061-1171 (EHRSLLRRVC…TAMETKIEEL (111 aa)) is the Bromo domain.

The protein belongs to the SNF2/RAD54 helicase family. As to quaternary structure, component of the RSC complex composed of at least arp9, arp42, rsc1, rsc4, rsc7, rsc9, rsc58, sfh1, snf21, ssr1, ssr2, ssr3 and ssr4. The complex interacts with histone and histone variant components of centromeric chromatin.

The protein resides in the nucleus. Functionally, helicase. Component of the chromatin structure remodeling complex (RSC), which is involved in transcription regulation and nucleosome positioning. Controls particularly membrane and organelle development genes. The sequence is that of Chromatin structure-remodeling complex subunit snf21 (snf21) from Schizosaccharomyces pombe (strain 972 / ATCC 24843) (Fission yeast).